Here is a 361-residue protein sequence, read N- to C-terminus: Terpene synthase 6 (361 aa).

The DDxx(x)D/E motif motif lies at 81-86; sequence DDVLDA. Positions 223–231 match the NDxxSxxxD/E motif motif; that stretch reads NDLVSYEKE.

Belongs to the terpene synthase family.

The enzyme catalyses (2E,6E)-farnesyl diphosphate = (2S,3R,6S,9S)-(-)-protoillud-7-ene + diphosphate. In terms of biological role, terpene synthase that converts its substrate farnesyl diphosphate (FPP) into the sesquiterpene (2S,3R,6S,9S)-(-)-protoillud-7-ene. This Dictyostelium discoideum (Social amoeba) protein is Terpene synthase 6.